Here is a 218-residue protein sequence, read N- to C-terminus: uncharacterized protein (218 aa).

The segment at 154-199 adopts an RING-type zinc-finger fold; sequence CFICTMEYSRTDKNLHPIILNCGHNLCRSCINKLTGNGIVKCPFDR.

This is an uncharacterized protein from Caenorhabditis elegans.